Here is a 337-residue protein sequence, read N- to C-terminus: Phosphate acyltransferase (337 aa).

The protein belongs to the PlsX family. Homodimer. Probably interacts with PlsY.

Its subcellular location is the cytoplasm. It catalyses the reaction a fatty acyl-[ACP] + phosphate = an acyl phosphate + holo-[ACP]. Its pathway is lipid metabolism; phospholipid metabolism. Catalyzes the reversible formation of acyl-phosphate (acyl-PO(4)) from acyl-[acyl-carrier-protein] (acyl-ACP). This enzyme utilizes acyl-ACP as fatty acyl donor, but not acyl-CoA. In Aromatoleum aromaticum (strain DSM 19018 / LMG 30748 / EbN1) (Azoarcus sp. (strain EbN1)), this protein is Phosphate acyltransferase.